Consider the following 241-residue polypeptide: Ribose-5-phosphate isomerase A (241 aa).

Residues 28–31, 83–86, and 96–99 contribute to the substrate site; these read TGST, DGAD, and KGGG. Glu-105 acts as the Proton acceptor in catalysis. Residue Lys-123 coordinates substrate.

It belongs to the ribose 5-phosphate isomerase family. As to quaternary structure, homodimer.

It catalyses the reaction aldehydo-D-ribose 5-phosphate = D-ribulose 5-phosphate. It participates in carbohydrate degradation; pentose phosphate pathway; D-ribose 5-phosphate from D-ribulose 5-phosphate (non-oxidative stage): step 1/1. In terms of biological role, catalyzes the reversible conversion of ribose-5-phosphate to ribulose 5-phosphate. This Bradyrhizobium diazoefficiens (strain JCM 10833 / BCRC 13528 / IAM 13628 / NBRC 14792 / USDA 110) protein is Ribose-5-phosphate isomerase A.